Here is a 55-residue protein sequence, read N- to C-terminus: Protein SOX-19 (55 aa).

The segment at residues 1–55 (MVWSQIERRKIMEQWPDMHNAEISKRLGKRWKLLPDYEKIPFIKEAERLRLKHMA) is a DNA-binding region (HMG box).

It localises to the nucleus. This chain is Protein SOX-19 (Sox19), found in Mus musculus (Mouse).